We begin with the raw amino-acid sequence, 468 residues long: 3-isopropylmalate dehydratase large subunit (468 aa).

Residues Cys347, Cys407, and Cys410 each coordinate [4Fe-4S] cluster.

It belongs to the aconitase/IPM isomerase family. LeuC type 1 subfamily. As to quaternary structure, heterodimer of LeuC and LeuD. It depends on [4Fe-4S] cluster as a cofactor.

It carries out the reaction (2R,3S)-3-isopropylmalate = (2S)-2-isopropylmalate. It functions in the pathway amino-acid biosynthesis; L-leucine biosynthesis; L-leucine from 3-methyl-2-oxobutanoate: step 2/4. Catalyzes the isomerization between 2-isopropylmalate and 3-isopropylmalate, via the formation of 2-isopropylmaleate. In Glaesserella parasuis serovar 5 (strain SH0165) (Haemophilus parasuis), this protein is 3-isopropylmalate dehydratase large subunit.